The following is a 90-amino-acid chain: Putative defensin-like protein 243 (90 aa).

The signal sequence occupies residues 1–19; it reads MKVEVIFLASCVLFSLIHA. Disulfide bonds link cysteine 33–cysteine 88, cysteine 43–cysteine 72, cysteine 53–cysteine 82, and cysteine 70–cysteine 84.

Belongs to the DEFL family.

The protein localises to the secreted. This chain is Putative defensin-like protein 243 (SCRL9), found in Arabidopsis thaliana (Mouse-ear cress).